Reading from the N-terminus, the 1070-residue chain is DNA double-strand break repair Rad50 ATPase (1070 aa).

ATP is bound by residues Arg12, 32 to 38 (NGSGKSS), and Gln142. Coiled-coil stretches lie at residues 227–257 (LEELNKKKEFAAARKGELDLRIAEYRERLQE), 369–403 (ECRTSIGAANKEIEGYRANIKQLEEENKRLREKAG), and 449–478 (LRELDSEMQSCRVAVSKGKSEIEALEKEIR). One can recognise a Zinc-hook domain in the interval 508–607 (LENLEDFNEL…KLNRLKEAKK (100 aa)). Residues Cys555 and Cys558 each contribute to the Zn(2+) site. Coiled-coil stretches lie at residues 570-614 (TAEE…QAYD) and 878-908 (LKRLKELKEELKALENKRLYLEAVYNNADEL). 969–974 (LLSGGE) is a binding site for ATP.

The protein belongs to the SMC family. RAD50 subfamily. Homodimer. Forms a heterotetramer composed of two Mre11 subunits and two Rad50 subunits. Requires Zn(2+) as cofactor.

In terms of biological role, part of the Rad50/Mre11 complex, which is involved in the early steps of DNA double-strand break (DSB) repair. The complex may facilitate opening of the processed DNA ends to aid in the recruitment of HerA and NurA. Rad50 controls the balance between DNA end bridging and DNA resection via ATP-dependent structural rearrangements of the Rad50/Mre11 complex. This is DNA double-strand break repair Rad50 ATPase from Methanosarcina mazei (strain ATCC BAA-159 / DSM 3647 / Goe1 / Go1 / JCM 11833 / OCM 88) (Methanosarcina frisia).